Reading from the N-terminus, the 372-residue chain is NADH-quinone oxidoreductase subunit H (372 aa).

A run of 8 helical transmembrane segments spans residues 34-54, 106-126, 139-159, 178-198, 217-237, 269-289, 313-333, and 352-372; these read LPLG…LYAL, FLFV…FAVL, VGLF…LAAG, IVSY…MAGT, FFLF…IASL, VIFL…AIVF, VWGA…QMWL, and VLTP…IYVP.

It belongs to the complex I subunit 1 family. As to quaternary structure, NDH-1 is composed of 14 different subunits. Subunits NuoA, H, J, K, L, M, N constitute the membrane sector of the complex.

It localises to the cell inner membrane. The enzyme catalyses a quinone + NADH + 5 H(+)(in) = a quinol + NAD(+) + 4 H(+)(out). Its function is as follows. NDH-1 shuttles electrons from NADH, via FMN and iron-sulfur (Fe-S) centers, to quinones in the respiratory chain. The immediate electron acceptor for the enzyme in this species is believed to be ubiquinone. Couples the redox reaction to proton translocation (for every two electrons transferred, four hydrogen ions are translocated across the cytoplasmic membrane), and thus conserves the redox energy in a proton gradient. This subunit may bind ubiquinone. This is NADH-quinone oxidoreductase subunit H from Chlorobium luteolum (strain DSM 273 / BCRC 81028 / 2530) (Pelodictyon luteolum).